The chain runs to 332 residues: Ubiquinone biosynthesis protein COQ4, mitochondrial (332 aa).

A mitochondrion-targeting transit peptide spans 1 to 16; it reads MFTVSKKSLQASRNAF. His212, Asp213, His216, and Glu228 together coordinate Zn(2+).

Belongs to the COQ4 family. Component of a multi-subunit COQ enzyme complex, composed of at least COQ3, COQ4, COQ5, COQ6, COQ7 and COQ9. Zn(2+) is required as a cofactor.

The protein resides in the mitochondrion inner membrane. The enzyme catalyses a 4-hydroxy-3-methoxy-5-(all-trans-polyprenyl)benzoate + H(+) = a 2-methoxy-6-(all-trans-polyprenyl)phenol + CO2. The protein operates within cofactor biosynthesis; ubiquinone biosynthesis. Its function is as follows. Lyase that catalyzes the C1-decarboxylation of 4-hydroxy-3-methoxy-5-(all-trans-polyprenyl)benzoic acid into 2-methoxy-6-(all-trans-polyprenyl)phenol during ubiquinone biosynthesis. This Kluyveromyces lactis (strain ATCC 8585 / CBS 2359 / DSM 70799 / NBRC 1267 / NRRL Y-1140 / WM37) (Yeast) protein is Ubiquinone biosynthesis protein COQ4, mitochondrial.